Reading from the N-terminus, the 298-residue chain is Tyrosine recombinase XerD (298 aa).

In terms of domain architecture, Core-binding (CB) spans 2-87; that stretch reads KQDLARIEQF…AVRRLFQYLY (86 aa). A Tyr recombinase domain is found at 108–292; the sequence is RLPKDLSEAQ…ATERLRQLHQ (185 aa). Catalysis depends on residues Arg148, Lys172, His244, Arg247, and His270. Tyr279 acts as the O-(3'-phospho-DNA)-tyrosine intermediate in catalysis.

This sequence belongs to the 'phage' integrase family. XerD subfamily. In terms of assembly, forms a cyclic heterotetrameric complex composed of two molecules of XerC and two molecules of XerD, in which XerC interacts with XerD via its C-terminal region, XerD interacts with XerC via its C-terminal region and so on.

It localises to the cytoplasm. FtsK may regulate the catalytic switch between XerC and XerD in the heterotetrameric complex during the two steps of the recombination process. Site-specific tyrosine recombinase, which acts by catalyzing the cutting and rejoining of the recombining DNA molecules. Binds cooperatively to specific DNA consensus sequences that are separated from XerC binding sites by a short central region, forming the heterotetrameric XerC-XerD complex that recombines DNA substrates. The complex is essential to convert dimers of the bacterial chromosome into monomers to permit their segregation at cell division. It also contributes to the segregational stability of plasmids. In the complex XerD specifically exchanges the bottom DNA strands. In Escherichia coli O157:H7, this protein is Tyrosine recombinase XerD.